A 478-amino-acid polypeptide reads, in one-letter code: MQIFNTLTGRKETFCPRDPGRVSIYVCGPTTYNFIHLGNARALVVFDTIRRYFLYKGYRVLYIQNFTDVDDKIINRSREEGIDPQTLAAKYVDEYFVDADALNVRRADVHPKVSDHIPEIIALITMIIDRGLAYVAGGDVYFAVRKFGGYGRLSKRSLDDLLAGARVEVGEQKRDPLDFALWKAAKPGEPWWESPWGRGRPGWHIECSAMALKYLGTGFDIHGGGADLIFPHHENEIAQSEGATGEPFARYWIHNGFITIREEKMSKSLGNVFLVRELTRLYPPEALRLFLLSNHYRNPLDYDPEAMEASVRAVNRLKTCLGLLRESLDRPAPDGDGGGGNRLEAVLEVLQGRFEAAMDDDFNTALAQAVMFDLTHEVNTYLHQNDRPSRGALQKALDLFDAFNRVLGIFPEHKGRIVLEAGAVSGDLSQGLLDLLIALRQDARRNKDFATADRIRDGLRALGILLEDTPQGVRWKKT.

Cys27 lines the Zn(2+) pocket. The 'HIGH' region motif lies at 29 to 39 (PTTYNFIHLGN). The Zn(2+) site is built by Cys207, His232, and Glu236. The 'KMSKS' region motif lies at 264–268 (KMSKS). Lys267 lines the ATP pocket.

Belongs to the class-I aminoacyl-tRNA synthetase family. Monomer. It depends on Zn(2+) as a cofactor.

The protein localises to the cytoplasm. It carries out the reaction tRNA(Cys) + L-cysteine + ATP = L-cysteinyl-tRNA(Cys) + AMP + diphosphate. The protein is Cysteine--tRNA ligase of Desulforudis audaxviator (strain MP104C).